The primary structure comprises 347 residues: Dihydroorotate dehydrogenase (quinone) (347 aa).

FMN-binding positions include 62-66 (AGLDK) and Ala-86. Position 66 (Lys-66) interacts with substrate. 111–115 (NRMGF) contacts substrate. FMN contacts are provided by Asn-139 and Asn-172. Asn-172 is a substrate binding site. Ser-175 acts as the Nucleophile in catalysis. Asn-177 is a binding site for substrate. Residues Lys-217 and Thr-245 each contribute to the FMN site. 246–247 (NT) is a binding site for substrate. FMN-binding positions include Gly-268, Gly-297, and 318–319 (YT).

This sequence belongs to the dihydroorotate dehydrogenase family. Type 2 subfamily. In terms of assembly, monomer. It depends on FMN as a cofactor.

Its subcellular location is the cell membrane. It catalyses the reaction (S)-dihydroorotate + a quinone = orotate + a quinol. The protein operates within pyrimidine metabolism; UMP biosynthesis via de novo pathway; orotate from (S)-dihydroorotate (quinone route): step 1/1. Its function is as follows. Catalyzes the conversion of dihydroorotate to orotate with quinone as electron acceptor. The sequence is that of Dihydroorotate dehydrogenase (quinone) from Coxiella burnetii (strain CbuK_Q154) (Coxiella burnetii (strain Q154)).